The following is a 214-amino-acid chain: Outer-membrane lipoprotein carrier protein (214 aa).

Positions M1–A23 are cleaved as a signal peptide.

Belongs to the LolA family. In terms of assembly, monomer.

It is found in the periplasm. In terms of biological role, participates in the translocation of lipoproteins from the inner membrane to the outer membrane. Only forms a complex with a lipoprotein if the residue after the N-terminal Cys is not an aspartate (The Asp acts as a targeting signal to indicate that the lipoprotein should stay in the inner membrane). The sequence is that of Outer-membrane lipoprotein carrier protein from Shewanella frigidimarina (strain NCIMB 400).